Here is a 122-residue protein sequence, read N- to C-terminus: Large ribosomal subunit protein uL14 (122 aa).

The protein belongs to the universal ribosomal protein uL14 family. In terms of assembly, part of the 50S ribosomal subunit. Forms a cluster with proteins L3 and L19. In the 70S ribosome, L14 and L19 interact and together make contacts with the 16S rRNA in bridges B5 and B8.

Functionally, binds to 23S rRNA. Forms part of two intersubunit bridges in the 70S ribosome. The chain is Large ribosomal subunit protein uL14 from Sulfurimonas denitrificans (strain ATCC 33889 / DSM 1251) (Thiomicrospira denitrificans (strain ATCC 33889 / DSM 1251)).